Consider the following 323-residue polypeptide: Arginase-1 (323 aa).

A disordered region spans residues 1–27 (MSSKPKPIEIIGAPFSKGQPRGGVEKG). At K17 the chain carries N6-succinyllysine. Residues S62 and S72 each carry the phosphoserine modification. An N6-succinyllysine modification is found at K75. Mn(2+) contacts are provided by H101, D124, H126, and D128. Substrate contacts are provided by residues 126–130 (HTDIN) and 137–139 (SGN). The residue at position 163 (S163) is a Phosphoserine. D183 lines the substrate pocket. Position 217 is a phosphoserine (S217). Mn(2+) contacts are provided by D232 and D234. Substrate-binding residues include T246 and E277. T281 is subject to Phosphothreonine.

Belongs to the arginase family. Homotrimer. Interacts with CMTM6. It depends on Mn(2+) as a cofactor. Detected in liver (at protein level).

The protein resides in the cytoplasm. Its subcellular location is the cytoplasmic granule. It carries out the reaction L-arginine + H2O = urea + L-ornithine. It functions in the pathway nitrogen metabolism; urea cycle; L-ornithine and urea from L-arginine: step 1/1. Its activity is regulated as follows. Inactivated by diethyl pyrocarbonate (DEPC). Key element of the urea cycle converting L-arginine to urea and L-ornithine, which is further metabolized into metabolites proline and polyamides that drive collagen synthesis and bioenergetic pathways critical for cell proliferation, respectively; the urea cycle takes place primarily in the liver and, to a lesser extent, in the kidneys. Its function is as follows. Functions in L-arginine homeostasis in nonhepatic tissues characterized by the competition between nitric oxide synthase (NOS) and arginase for the available intracellular substrate arginine. Arginine metabolism is a critical regulator of innate and adaptive immune responses. Involved in an antimicrobial effector pathway in polymorphonuclear granulocytes (PMN). Upon PMN cell death is liberated from the phagolysosome and depletes arginine in the microenvironment leading to suppressed T cell and natural killer (NK) cell proliferation and cytokine secretion. In group 2 innate lymphoid cells (ILC2s) promotes acute type 2 inflammation in the lung and is involved in optimal ILC2 proliferation but not survival. Plays a role in the immune response of alternatively activated or M2 macrophages in processes such as wound healing and tissue regeneration, immune defense against multicellular pathogens and parasites, and immune suppression and allergic inflammation; the regulatory outcome seems to be organ specific. In tumor-infiltrating dendritic cells (DCs) and myeloid-derived suppressor cells (MDSCs) plays a role in suppression of T cell-mediated antitumor immunity. In Rattus norvegicus (Rat), this protein is Arginase-1 (Arg1).